A 53-amino-acid chain; its full sequence is GIDPNYRSLPVVKEEQGVKIYGTYEPPTKLGIWGTIVGVDFDLCIADGSCINA.

Residues 1–35 (GIDPNYRSLPVVKEEQGVKIYGTYEPPTKLGIWGT) are N-terminal extension. The residue at position 29 (K29) is an N6-methyllysine. The region spanning 34–53 (GTIVGVDFDLCIADGSCINA) is the 4Fe-4S ferredoxin-type 1 domain. C44 and C50 together coordinate [3Fe-4S] cluster.

[3Fe-4S] cluster serves as cofactor. [4Fe-4S] cluster is required as a cofactor.

Ferredoxins are iron-sulfur proteins that transfer electrons in a wide variety of metabolic reactions. In Sulfuracidifex metallicus (Sulfolobus metallicus), this protein is Ferredoxin B.